The following is a 431-amino-acid chain: SPI-1 type 3 secretion system ATPase (431 aa).

Position 162 to 167 (162 to 167 (GCGKTM)) interacts with ATP.

Belongs to the ATPase alpha/beta chains family. T3SS ATPase subfamily. As to quaternary structure, the core secretion machinery of the T3SS is composed of approximately 20 different proteins, including cytoplasmic components, a base, an export apparatus and a needle. This subunit is part of the cytosolic complex. Forms homohexamers.

It localises to the cytoplasm. It catalyses the reaction ATP + H2O + cellular proteinSide 1 = ADP + phosphate + cellular proteinSide 2.. ATPase component of the type III secretion system (T3SS), also called injectisome, which is used to inject bacterial effector proteins into eukaryotic host cells. Acts as a molecular motor to provide the energy that is required for the export of proteins. Required for type III secretion apparatus (T3SA) formation, proper protein secretion, host cell invasion and virulence. May play a critical role in T3SS substrate recognition, disassembly of the effector/chaperone complex and unfolding of the effector in an ATP-dependent manner prior to secretion. This Salmonella typhi protein is SPI-1 type 3 secretion system ATPase.